The sequence spans 394 residues: General receptor for phosphoinositides 1-associated scaffold protein (394 aa).

Positions 1 to 51 (MTLRRLRKLQQKEEATAAPDLAGRAPDSEAARAAPTPSGPPAAAAPPGAPG) are disordered. Residues 37 to 49 (PSGPPAAAAPPGA) are compositionally biased toward pro residues. Thr76 carries the post-translational modification Phosphothreonine. The residue at position 93 (Ser93) is a Phosphoserine. The PDZ domain maps to 100–189 (VLTLEKGDNQ…VLRLETLYGT (90 aa)). Residues 180–257 (VLRLETLYGT…GAGLLPGSLP (78 aa)) form an interaction with PSCD3 region. Tyr236 bears the Phosphotyrosine mark. Arg269 bears the Omega-N-methylarginine mark. A disordered region spans residues 293-318 (EPQALPPPPPPARAPGPGSAETPASV). The span at 296–306 (ALPPPPPPARA) shows a compositional bias: pro residues. Position 386 is a phosphoserine (Ser386).

In terms of assembly, heteromer. Composed of TAMALIN, CYTH2 and at least one GRM1. Also interacts with CYTH3, GRM2, GRM3 and GRM5. As to expression, expressed in brain.

It localises to the cytoplasm. The protein resides in the perinuclear region. Its subcellular location is the cell membrane. The protein localises to the postsynaptic cell membrane. Functionally, plays a role in intracellular trafficking and contributes to the macromolecular organization of group 1 metabotropic glutamate receptors (mGluRs) at synapses. The chain is General receptor for phosphoinositides 1-associated scaffold protein from Rattus norvegicus (Rat).